Here is a 320-residue protein sequence, read N- to C-terminus: Cytochrome f (320 aa).

An N-terminal signal peptide occupies residues 1–36 (MKLNSLINLIQKSIYSCTLLLTILNIICIAPNSSNA). Heme contacts are provided by phenylalanine 37, cysteine 57, cysteine 60, and histidine 61. The helical transmembrane segment at 286–305 (IKGMIAFFFVSVLAQIFFVL) threads the bilayer.

It belongs to the cytochrome f family. In terms of assembly, the 4 large subunits of the cytochrome b6-f complex are cytochrome b6, subunit IV (17 kDa polypeptide, petD), cytochrome f and the Rieske protein, while the 4 small subunits are PetG, PetL, PetM and PetN. The complex functions as a dimer. Requires heme as cofactor.

It is found in the plastid. The protein localises to the chloroplast thylakoid membrane. Its function is as follows. Component of the cytochrome b6-f complex, which mediates electron transfer between photosystem II (PSII) and photosystem I (PSI), cyclic electron flow around PSI, and state transitions. This chain is Cytochrome f (petA), found in Porphyra purpurea (Red seaweed).